A 101-amino-acid chain; its full sequence is NAD(P)H-quinone oxidoreductase subunit 4L, chloroplastic (101 aa).

The next 3 helical transmembrane spans lie at 2-22, 32-52, and 61-81; these read ILEH…YGLI, MCLE…SDFF, and IFCI…LAIV.

It belongs to the complex I subunit 4L family. As to quaternary structure, NDH is composed of at least 16 different subunits, 5 of which are encoded in the nucleus.

It localises to the plastid. It is found in the chloroplast thylakoid membrane. The enzyme catalyses a plastoquinone + NADH + (n+1) H(+)(in) = a plastoquinol + NAD(+) + n H(+)(out). It catalyses the reaction a plastoquinone + NADPH + (n+1) H(+)(in) = a plastoquinol + NADP(+) + n H(+)(out). NDH shuttles electrons from NAD(P)H:plastoquinone, via FMN and iron-sulfur (Fe-S) centers, to quinones in the photosynthetic chain and possibly in a chloroplast respiratory chain. The immediate electron acceptor for the enzyme in this species is believed to be plastoquinone. Couples the redox reaction to proton translocation, and thus conserves the redox energy in a proton gradient. This is NAD(P)H-quinone oxidoreductase subunit 4L, chloroplastic from Olimarabidopsis pumila (Dwarf rocket).